The following is a 424-amino-acid chain: MELSYRLFICLLLWGSTELCYPQPLWLLQGGASHPETSVQPVLVECQEATLMVMVSKDLFGTGKLIRAADLTLGPEACEPLVSMDTEDVVRFEVGLHECGNSMQVTDDALVYSTFLLHDPRPVGNLSIVRTNRAEIPIECRYPRQGNVSSQAILPTWLPFRTTVFSEEKLTFSLRLMEENWNAEKRSPTFHLGDAAHLQAEIHTGSHVPLRLFVDHCVATPTPDQNASPYHTIVDFHGCLVDGLTDASSAFKVPRPGPDTLQFTVDVFHFANDSRNMIYITCHLKVTLAEQDPDELNKACSFSKPSNSWFPVEGSADICQCCNKGDCGTPSHSRRQPHVMSQWSRSASRNRRHVTEEADVTVGPLIFLDRRGDHEVEQWALPSDTSVVLLGVGLAVVVSLTLTAVILVLTRRCRTASHPVSASE.

The signal sequence occupies residues 1–22 (MELSYRLFICLLLWGSTELCYP). The residue at position 23 (glutamine 23) is a Pyrrolidone carboxylic acid. Topologically, residues 23–387 (QPLWLLQGGA…QWALPSDTSV (365 aa)) are extracellular. Positions 45–307 (ECQEATLMVM…KACSFSKPSN (263 aa)) constitute a ZP domain. 2 cysteine pairs are disulfide-bonded: cysteine 46/cysteine 140 and cysteine 78/cysteine 99. N-linked (GlcNAc...) asparagine glycans are attached at residues asparagine 125 and asparagine 147. Residues threonine 156, threonine 162, and threonine 163 are each glycosylated (O-linked (GalNAc...) threonine). Disulfide bonds link cysteine 217–cysteine 282 and cysteine 239–cysteine 300. A glycan (N-linked (GlcNAc...) asparagine) is linked at asparagine 272. The disordered stretch occupies residues 330–356 (PSHSRRQPHVMSQWSRSASRNRRHVTE). The propeptide at 351–424 (RRHVTEEADV…TASHPVSASE (74 aa)) is removed in mature form. A helical membrane pass occupies residues 388 to 408 (VLLGVGLAVVVSLTLTAVILV). Over 409–424 (LTRRCRTASHPVSASE) the chain is Cytoplasmic.

It belongs to the ZP domain family. ZPC subfamily. Polymers of ZP2 and ZP3 organized into long filaments cross-linked by ZP1 homodimers. Interacts with ZP1 and ZP2. Post-translationally, proteolytically cleaved before the transmembrane segment to yield the secreted ectodomain incorporated in the zona pellucida. In terms of processing, N-glycosylated. O-glycosylated; removal of O-linked glycans may play an important role in the post-fertilization block to polyspermy. In terms of tissue distribution, expressed in oocytes (at protein level).

It localises to the zona pellucida. The protein resides in the cell membrane. In terms of biological role, component of the zona pellucida, an extracellular matrix surrounding oocytes which mediates sperm binding, induction of the acrosome reaction and prevents post-fertilization polyspermy. The zona pellucida is composed of 3 to 4 glycoproteins, ZP1, ZP2, ZP3, and ZP4. ZP3 is essential for sperm binding and zona matrix formation. The polypeptide is Zona pellucida sperm-binding protein 3 (ZP3) (Homo sapiens (Human)).